The primary structure comprises 459 residues: GTPase Der (459 aa).

2 consecutive EngA-type G domains span residues 3 to 167 (FTFA…PEPE) and 188 to 363 (IRVA…AVWN). Residues 9–16 (GRPNVGKS), 56–60 (DTAGL), 119–122 (NKSE), 194–201 (GRPNAGKS), 241–245 (DTAGL), and 306–309 (NKWD) each bind GTP. One can recognise a KH-like domain in the interval 364-448 (TRVSTAALNR…PVRITLREKA (85 aa)).

It belongs to the TRAFAC class TrmE-Era-EngA-EngB-Septin-like GTPase superfamily. EngA (Der) GTPase family. As to quaternary structure, associates with the 50S ribosomal subunit.

Functionally, GTPase that plays an essential role in the late steps of ribosome biogenesis. This chain is GTPase Der, found in Rhodopseudomonas palustris (strain HaA2).